The chain runs to 189 residues: Glucose-6-phosphate isomerase (189 aa).

Positions 88, 90, 97, and 136 each coordinate Fe cation.

The protein belongs to the archaeal-type GPI family. In terms of assembly, homodimer.

The protein resides in the cytoplasm. The catalysed reaction is alpha-D-glucose 6-phosphate = beta-D-fructose 6-phosphate. Its pathway is carbohydrate degradation; glycolysis; D-glyceraldehyde 3-phosphate and glycerone phosphate from D-glucose: step 2/4. The sequence is that of Glucose-6-phosphate isomerase from Thermococcus kodakarensis (strain ATCC BAA-918 / JCM 12380 / KOD1) (Pyrococcus kodakaraensis (strain KOD1)).